A 236-amino-acid polypeptide reads, in one-letter code: Peptidase E (236 aa).

Catalysis depends on charge relay system residues Ser-122, Asp-137, and His-159.

This sequence belongs to the peptidase S51 family.

The protein localises to the cytoplasm. The enzyme catalyses Dipeptidase E catalyzes the hydrolysis of dipeptides Asp-|-Xaa. It does not act on peptides with N-terminal Glu, Asn or Gln, nor does it cleave isoaspartyl peptides.. Its function is as follows. Hydrolyzes dipeptides containing N-terminal aspartate residues. May play a role in allowing the cell to use peptide aspartate to spare carbon otherwise required for the synthesis of the aspartate family of amino acids. The polypeptide is Peptidase E (Shewanella putrefaciens (strain CN-32 / ATCC BAA-453)).